Here is a 265-residue protein sequence, read N- to C-terminus: Non-structural protein 2a (265 aa).

This sequence belongs to the coronaviruses ns2a protein family.

It localises to the host cytoplasm. Not essential for virus replication in transformed murine cells. This is Non-structural protein 2a from Mus musculus (Mouse).